The primary structure comprises 271 residues: Mannosyl-3-phosphoglycerate phosphatase (271 aa).

The active-site Nucleophile is the aspartate 13. 3 residues coordinate Mg(2+): aspartate 13, aspartate 15, and aspartate 214.

Belongs to the HAD-like hydrolase superfamily. MPGP family. Requires Mg(2+) as cofactor.

The protein localises to the cytoplasm. It catalyses the reaction 2-O-(alpha-D-mannosyl)-3-phosphoglycerate + H2O = (2R)-2-O-(alpha-D-mannosyl)-glycerate + phosphate. The sequence is that of Mannosyl-3-phosphoglycerate phosphatase from Escherichia coli (strain SE11).